Reading from the N-terminus, the 151-residue chain is Cytochrome c-type biogenesis protein CcmE (151 aa).

At 1–8 (MNPQRKKR) the chain is on the cytoplasmic side. A helical; Signal-anchor for type II membrane protein membrane pass occupies residues 9–29 (LFLILGLLAGVAVAVGFALSA). At 30 to 151 (LQQNINLFYT…QAASGAEAKP (122 aa)) the chain is on the periplasmic side. Positions 124 and 128 each coordinate heme.

Belongs to the CcmE/CycJ family.

It is found in the cell inner membrane. Its function is as follows. Heme chaperone required for the biogenesis of c-type cytochromes. Transiently binds heme delivered by CcmC and transfers the heme to apo-cytochromes in a process facilitated by CcmF and CcmH. This chain is Cytochrome c-type biogenesis protein CcmE, found in Pseudomonas putida (strain W619).